Reading from the N-terminus, the 789-residue chain is Phenylalanine--tRNA ligase beta subunit (789 aa).

In terms of domain architecture, tRNA-binding spans 39–149 (ADGLEAFRIA…HEAPVGQSYV (111 aa)). The B5 domain occupies 399–471 (SAVPVISYDP…RIEGLDNVPS (73 aa)). Aspartate 449, aspartate 455, and aspartate 459 together coordinate Mg(2+). In terms of domain architecture, FDX-ACB spans 696–788 (SMLQPVFRDF…AAAKKGARLR (93 aa)).

This sequence belongs to the phenylalanyl-tRNA synthetase beta subunit family. Type 1 subfamily. In terms of assembly, tetramer of two alpha and two beta subunits. Mg(2+) serves as cofactor.

The protein resides in the cytoplasm. The catalysed reaction is tRNA(Phe) + L-phenylalanine + ATP = L-phenylalanyl-tRNA(Phe) + AMP + diphosphate + H(+). This Zymomonas mobilis subsp. mobilis (strain ATCC 31821 / ZM4 / CP4) protein is Phenylalanine--tRNA ligase beta subunit.